A 1013-amino-acid chain; its full sequence is GPI ethanolamine phosphate transferase 3 (1013 aa).

The helical transmembrane segment at 41–61 (TLYIFLYSALAALQFIAIAFF) threads the bilayer. Residues Asn184, Asn205, Asn336, Asn399, and Asn423 are each glycosylated (N-linked (GlcNAc...) asparagine). 3 helical membrane passes run 447–467 (YYSI…LITI), 484–504 (VPTI…VFYV), and 515–535 (LWAS…VPIF). The N-linked (GlcNAc...) asparagine glycan is linked to Asn539. The next 4 helical transmembrane spans lie at 558–578 (VAAF…FTIW), 582–602 (IVSF…VFLP), 643–663 (IVGG…SLIT), and 682–702 (NYSF…PACI). The N-linked (GlcNAc...) asparagine glycan is linked to Asn707. A helical membrane pass occupies residues 715 to 735 (AAPIWIGMLMKSILFVNFIYW). Asn742, Asn750, and Asn755 each carry an N-linked (GlcNAc...) asparagine glycan. The next 7 helical transmembrane spans lie at 761–781 (IVVG…PLCI), 802–822 (NAYG…ILLF), 825–845 (PLAQ…LEIF), 868–888 (FFST…GFIL), 899–919 (LGIV…VALL), 943–963 (GMLL…VTNF), and 977–997 (FMFA…ITIA).

Belongs to the PIGG/PIGN/PIGO family. PIGO subfamily.

The protein localises to the endoplasmic reticulum membrane. It participates in glycolipid biosynthesis; glycosylphosphatidylinositol-anchor biosynthesis. Its function is as follows. Involved in glycosylphosphatidylinositol-anchor biosynthesis. Transfers ethanolamine phosphate to the GPI third mannose which links the GPI-anchor to the C-terminus of the proteins by an amide bond. Involved in cell wall biosynthesis. The chain is GPI ethanolamine phosphate transferase 3 (GPI13) from Eremothecium gossypii (strain ATCC 10895 / CBS 109.51 / FGSC 9923 / NRRL Y-1056) (Yeast).